A 172-amino-acid polypeptide reads, in one-letter code: Lipoprotein signal peptidase (172 aa).

3 helical membrane-spanning segments follow: residues L10–V30, W68–L88, and S98–M118. Active-site residues include D124 and D142. The helical transmembrane segment at F138 to F158 threads the bilayer.

It belongs to the peptidase A8 family.

It localises to the cell inner membrane. The catalysed reaction is Release of signal peptides from bacterial membrane prolipoproteins. Hydrolyzes -Xaa-Yaa-Zaa-|-(S,diacylglyceryl)Cys-, in which Xaa is hydrophobic (preferably Leu), and Yaa (Ala or Ser) and Zaa (Gly or Ala) have small, neutral side chains.. It functions in the pathway protein modification; lipoprotein biosynthesis (signal peptide cleavage). Its function is as follows. This protein specifically catalyzes the removal of signal peptides from prolipoproteins. The sequence is that of Lipoprotein signal peptidase from Xanthomonas axonopodis pv. citri (strain 306).